The sequence spans 439 residues: Tol-Pal system protein TolB (439 aa).

The signal sequence occupies residues 1 to 22 (MKKPLRWLAALTVLLLPLSALA).

It belongs to the TolB family. As to quaternary structure, the Tol-Pal system is composed of five core proteins: the inner membrane proteins TolA, TolQ and TolR, the periplasmic protein TolB and the outer membrane protein Pal. They form a network linking the inner and outer membranes and the peptidoglycan layer.

The protein resides in the periplasm. In terms of biological role, part of the Tol-Pal system, which plays a role in outer membrane invagination during cell division and is important for maintaining outer membrane integrity. This chain is Tol-Pal system protein TolB, found in Xanthomonas oryzae pv. oryzae (strain KACC10331 / KXO85).